The following is a 169-amino-acid chain: MARGGDTGCTGPSETSASGAAAIALPGLEGPATDAQCQTLPLTVLKSRSPSPRSLPPALSCPPPQPAMLEHLSSLPTQMDYKGQKLAEQMFQGIILFSAIVGFIYGYVAEQFGWTVYIVMAGFAFSCLLTLPPWPIYRRHPLKWLPVQESSTDDKKPGERKIKRHAKNN.

The Cytoplasmic segment spans residues 1-93 (MARGGDTGCT…QKLAEQMFQG (93 aa)). The tract at residues 91–169 (FQGIILFSAI…RKIKRHAKNN (79 aa)) is (Microbial infection) Interaction with JEV NS2B. A helical membrane pass occupies residues 94-114 (IILFSAIVGFIYGYVAEQFGW). Positions 110 to 169 (EQFGWTVYIVMAGFAFSCLLTLPPWPIYRRHPLKWLPVQESSTDDKKPGERKIKRHAKNN) are (Microbial infection) Interaction with HCV NS2 and HCV E2. Position 115 (threonine 115) is a topological domain, lumenal. The chain crosses the membrane as a helical span at residues 116–136 (VYIVMAGFAFSCLLTLPPWPI). Topologically, residues 137-169 (YRRHPLKWLPVQESSTDDKKPGERKIKRHAKNN) are cytoplasmic. The interval 148–169 (QESSTDDKKPGERKIKRHAKNN) is disordered.

This sequence belongs to the SPCS1 family. Component of the signal peptidase complex paralog A (SPC-A) composed of a catalytic subunit SEC11A and three accessory subunits SPCS1, SPCS2 and SPCS3. Component of the signal peptidase complex paralog C (SPC-C) composed of a catalytic subunit SEC11C and three accessory subunits SPCS1, SPCS2 and SPCS3. Within the complex, interacts with SPCS2 and SPCS3. The complex induces a local thinning of the ER membrane which is used to measure the length of the signal peptide (SP) h-region of protein substrates. This ensures the selectivity of the complex towards h-regions shorter than 18-20 amino acids. As to quaternary structure, (Microbial infection) Interacts with hepatitis C virus (HCV) proteins NS2 and E2. Interacts with NS2B from Japanese encephalitis virus (JEV), West Nile virus (WNV), and Zika virus (ZIKV). In terms of processing, may be phosphorylated.

Its subcellular location is the endoplasmic reticulum membrane. Functionally, component of the signal peptidase complex (SPC) which catalyzes the cleavage of N-terminal signal sequences from nascent proteins as they are translocated into the lumen of the endoplasmic reticulum. Dispensable for SPC enzymatic activity. In terms of biological role, (Microbial infection) Required for the post-translational processing of proteins involved in virion assembly and secretion from flaviviruses such as West Nile virus (WNV), Japanese encephalitis virus (JEV), Dengue virus type 2 (DENV-2), Yellow Fever virus (YFV), Zika virus (ZIKV) and hepatitis C virus (HCV). Plays a key role in the post-translational processing of flaviviral structural proteins prM, E, and NS1. In HCV, it is involved in virion assembly where it promotes the interaction between HCV virus proteins NS2 and E2. The polypeptide is Signal peptidase complex subunit 1 (SPCS1) (Homo sapiens (Human)).